The sequence spans 564 residues: Poly(U)-binding-splicing factor PUF60 (564 aa).

The tract at residues 1 to 521 (MATATIALQV…EDAEIIVKIF (521 aa)) is inhibits homodimerization. The disordered stretch occupies residues 37–61 (KWKPPQGTESIKMENGQSTGTKLGL). Residue lysine 48 forms a Glycyl lysine isopeptide (Lys-Gly) (interchain with G-Cter in SUMO2) linkage. The residue at position 65 (threonine 65) is a Phosphothreonine. Residues 82–564 (QSIKSVLVKQ…ERFDNSDLSA (483 aa)) are inhibits transcriptional repression, interaction with ERCC3 and apoptosis induction. A Glycyl lysine isopeptide (Lys-Gly) (interchain with G-Cter in SUMO2) cross-link involves residue lysine 85. Serine 117 carries the post-translational modification Phosphoserine. RRM domains follow at residues 134-212 (CRVY…RPSN) and 231-309 (NRIY…KAVT). A Phosphoserine modification is found at serine 249. An N6-acetyllysine modification is found at lysine 256. Threonine 319 is modified (phosphothreonine). The tract at residues 421–442 (KKEKEEEELFPESERPEMLSEQ) is disordered. Lysine 424 is covalently cross-linked (Glycyl lysine isopeptide (Lys-Gly) (interchain with G-Cter in SUMO2)). Over residues 432–442 (ESERPEMLSEQ) the composition is skewed to basic and acidic residues. At lysine 459 the chain carries N6-acetyllysine. Residue lysine 463 forms a Glycyl lysine isopeptide (Lys-Gly) (interchain with G-Cter in SUMO2) linkage. The region spanning 467–554 (TVMVLRNMVD…RKVVAEVYDQ (88 aa)) is the RRM 3; atypical domain.

This sequence belongs to the RRM half pint family. In terms of assembly, homodimer. Associates with the spliceosome. Found in a complex with RO60 and Y5 RNA. Found in a complex with FUBP1 and far upstream element (FUSE) DNA segment. Interacts directly with ERCC3. Interacts with CDK7 and GTF2H1. Interacts with SRSF11/P54. Interacts with ARGLU1; interaction may be involved in ARGLU1-mediated modulation of alternative splicing.

The protein resides in the nucleus. DNA- and RNA-binding protein, involved in several nuclear processes such as pre-mRNA splicing, apoptosis and transcription regulation. In association with FUBP1 regulates MYC transcription at the P2 promoter through the core-TFIIH basal transcription factor. Acts as a transcriptional repressor through the core-TFIIH basal transcription factor. Represses FUBP1-induced transcriptional activation but not basal transcription. Decreases ERCC3 helicase activity. Is also involved in pre-mRNA splicing. Promotes splicing of an intron with weak 3'-splice site and pyrimidine tract in a cooperative manner with U2AF2. Involved in apoptosis induction when overexpressed in HeLa cells. Modulates alternative splicing of several mRNAs. Binds to relaxed DNA of active promoter regions. Binds to the pyrimidine tract and 3'-splice site regions of pre-mRNA; binding is enhanced in presence of U2AF2. Binds to Y5 RNA in association with RO60. Binds to poly(U) RNA. The chain is Poly(U)-binding-splicing factor PUF60 from Rattus norvegicus (Rat).